The primary structure comprises 295 residues: GTPase Era (295 aa).

An Era-type G domain is found at 4 to 171; that stretch reads KSGFVTIIGR…INLIVQYLPE (168 aa). The interval 12–19 is G1; it reads GRPNVGKS. 12-19 contacts GTP; it reads GRPNVGKS. Residues 38 to 42 are G2; that stretch reads QTTRN. Residues 59–62 form a G3 region; the sequence is DTPG. GTP is bound by residues 59–63 and 121–124; these read DTPGI and NKID. The interval 121 to 124 is G4; it reads NKID. Residues 150–152 are G5; sequence ISA. A KH type-2 domain is found at 194 to 280; the sequence is IREKILHYTD…YLELWVKVKE (87 aa).

This sequence belongs to the TRAFAC class TrmE-Era-EngA-EngB-Septin-like GTPase superfamily. Era GTPase family. In terms of assembly, monomer.

The protein resides in the cytoplasm. It is found in the cell membrane. Its function is as follows. An essential GTPase that binds both GDP and GTP, with rapid nucleotide exchange. Plays a role in 16S rRNA processing and 30S ribosomal subunit biogenesis and possibly also in cell cycle regulation and energy metabolism. The sequence is that of GTPase Era from Alkaliphilus oremlandii (strain OhILAs) (Clostridium oremlandii (strain OhILAs)).